We begin with the raw amino-acid sequence, 702 residues long: Ribosomal RNA large subunit methyltransferase K/L (702 aa).

The 112-residue stretch at leucine 43–leucine 154 folds into the THUMP domain.

It belongs to the methyltransferase superfamily. RlmKL family.

The protein resides in the cytoplasm. It carries out the reaction guanosine(2445) in 23S rRNA + S-adenosyl-L-methionine = N(2)-methylguanosine(2445) in 23S rRNA + S-adenosyl-L-homocysteine + H(+). The catalysed reaction is guanosine(2069) in 23S rRNA + S-adenosyl-L-methionine = N(2)-methylguanosine(2069) in 23S rRNA + S-adenosyl-L-homocysteine + H(+). Its function is as follows. Specifically methylates the guanine in position 2445 (m2G2445) and the guanine in position 2069 (m7G2069) of 23S rRNA. The sequence is that of Ribosomal RNA large subunit methyltransferase K/L from Escherichia coli O157:H7.